The following is a 202-amino-acid chain: MAIRKPALSVSEARRLAVARSEIHHPNPTLVPQELDLQHLPEKADEKDQQREPPVAEHIYSPDRQLKLTVDALSPPPSPKKLQVFLSARPPAPQVSKTYDNLVRQYSPSKSLQMILRRALDDFESMLADGSFRVALKSYPIPLTTEKSVLVQTSRMFPVALLEVARSHFDPLGLETTRAFGHKLATAALASFFAREKPSRNW.

Residues 24–56 (HHPNPTLVPQELDLQHLPEKADEKDQQREPPVA) are disordered. Residues 36-56 (DLQHLPEKADEKDQQREPPVA) are compositionally biased toward basic and acidic residues.

This Rhizobium radiobacter (Agrobacterium tumefaciens) protein is Protein virC2 (virC2).